Consider the following 246-residue polypeptide: Cell division protein ZapD (246 aa).

This sequence belongs to the ZapD family. Interacts with FtsZ.

Its subcellular location is the cytoplasm. In terms of biological role, cell division factor that enhances FtsZ-ring assembly. Directly interacts with FtsZ and promotes bundling of FtsZ protofilaments, with a reduction in FtsZ GTPase activity. The protein is Cell division protein ZapD of Vibrio vulnificus (strain CMCP6).